The primary structure comprises 235 residues: 6-phosphogluconolactonase (235 aa).

The protein belongs to the glucosamine/galactosamine-6-phosphate isomerase family. 6-phosphogluconolactonase subfamily.

The catalysed reaction is 6-phospho-D-glucono-1,5-lactone + H2O = 6-phospho-D-gluconate + H(+). Its pathway is carbohydrate degradation; pentose phosphate pathway; D-ribulose 5-phosphate from D-glucose 6-phosphate (oxidative stage): step 2/3. In terms of biological role, hydrolysis of 6-phosphogluconolactone to 6-phosphogluconate. The polypeptide is 6-phosphogluconolactonase (pgl) (Borreliella burgdorferi (strain ATCC 35210 / DSM 4680 / CIP 102532 / B31) (Borrelia burgdorferi)).